We begin with the raw amino-acid sequence, 523 residues long: Bifunctional purine biosynthesis protein PurH (523 aa).

Positions 4–152 constitute an MGS-like domain; the sequence is DHIRRPIRRA…KNHPSVAVVT (149 aa).

This sequence belongs to the PurH family.

The catalysed reaction is (6R)-10-formyltetrahydrofolate + 5-amino-1-(5-phospho-beta-D-ribosyl)imidazole-4-carboxamide = 5-formamido-1-(5-phospho-D-ribosyl)imidazole-4-carboxamide + (6S)-5,6,7,8-tetrahydrofolate. It carries out the reaction IMP + H2O = 5-formamido-1-(5-phospho-D-ribosyl)imidazole-4-carboxamide. The protein operates within purine metabolism; IMP biosynthesis via de novo pathway; 5-formamido-1-(5-phospho-D-ribosyl)imidazole-4-carboxamide from 5-amino-1-(5-phospho-D-ribosyl)imidazole-4-carboxamide (10-formyl THF route): step 1/1. It participates in purine metabolism; IMP biosynthesis via de novo pathway; IMP from 5-formamido-1-(5-phospho-D-ribosyl)imidazole-4-carboxamide: step 1/1. This is Bifunctional purine biosynthesis protein PurH from Mycobacterium ulcerans (strain Agy99).